Here is a 216-residue protein sequence, read N- to C-terminus: MTTKGILGKKVGMTQVFTDAGELIPVTVVEATPNVVLQVKTMENDGYNAIQLGYQDKREVLSNKPEQGHVAKANTTPKRFIREFTDVELGDYKVADEVKVDTFQAGDIVDVTGVTKGHGYQGNIHKDGQSRGPMAHGSRYHRRPGSLGAIINRVFPGMKLPGRMGNKQVTIQNLVIVKADVENNVLLIKGNVPGANKSLVTVKSAVRPPRPKQSEK.

Positions 119 to 143 (GYQGNIHKDGQSRGPMAHGSRYHRR) are disordered.

It belongs to the universal ribosomal protein uL3 family. As to quaternary structure, part of the 50S ribosomal subunit. Forms a cluster with proteins L14 and L19.

One of the primary rRNA binding proteins, it binds directly near the 3'-end of the 23S rRNA, where it nucleates assembly of the 50S subunit. The protein is Large ribosomal subunit protein uL3 of Levilactobacillus brevis (strain ATCC 367 / BCRC 12310 / CIP 105137 / JCM 1170 / LMG 11437 / NCIMB 947 / NCTC 947) (Lactobacillus brevis).